The chain runs to 285 residues: mRNA decay factor CTH2 (285 aa).

Residues 37-55 (INIRELEEYYNKTILNEDN) are required for mRNA decay activity. The tract at residues 132–164 (LQQLSQQKPKNDASFSSEKESSAQPKVKSQVQE) is disordered. The span at 153 to 164 (SAQPKVKSQVQE) shows a compositional bias: polar residues. 2 consecutive C3H1-type zinc fingers follow at residues 169–197 (LYKTELCESFTLKGSCPYGSKCQFAHGLG) and 207–235 (NFRTKPCVNWEKLGYCPYGRRCCFKHGDD). Residues 252-271 (STSKQSDEKRSNGRGSAKKK) form a disordered region.

Interacts with DHH1.

It localises to the nucleus. The protein resides in the cytoplasm. The protein localises to the P-body. In terms of biological role, binds to specific AU-rich elements (ARE) in the 3'-untranslated region of target mRNAs and promotes their degradation. In response to iron deficiency, promotes the decay of many mRNAs encoding proteins involved in iron-dependent pathways. Recruits the DHH1 helicase to the SDH4 mRNA and promotes SDH4 mRNA decay. Also destabilizes target mRNA by modulating 3'-end processing, creating extended transcripts that are prone for degradation. This Saccharomyces cerevisiae (strain ATCC 204508 / S288c) (Baker's yeast) protein is mRNA decay factor CTH2 (TIS11).